The sequence spans 183 residues: uncharacterized protein (183 aa).

A Glycyl lysine isopeptide (Lys-Gly) (interchain with G-Cter in ubiquitin) cross-link involves residue Lys-21. Disordered regions lie at residues 24–111 and 160–183; these read NTTT…QNDN and PQSI…TRRP. Over residues 99–108 the composition is skewed to low complexity; sequence QQQQQQQQQQ. Over residues 170–183 the composition is skewed to polar residues; it reads LPPSNASNTTTRRP.

Its subcellular location is the cytoplasm. This is an uncharacterized protein from Saccharomyces cerevisiae (strain ATCC 204508 / S288c) (Baker's yeast).